The chain runs to 592 residues: Aspartate--tRNA(Asp/Asn) ligase (592 aa).

E175 serves as a coordination point for L-aspartate. Residues Q199–K202 form an aspartate region. R221 is an L-aspartate binding site. Residues R221 to E223 and Q230 each bind ATP. Residue H450 coordinates L-aspartate. ATP is bound at residue E483. R490 lines the L-aspartate pocket. ATP is bound at residue G535 to R538.

Belongs to the class-II aminoacyl-tRNA synthetase family. Type 1 subfamily. As to quaternary structure, homodimer.

Its subcellular location is the cytoplasm. It carries out the reaction tRNA(Asx) + L-aspartate + ATP = L-aspartyl-tRNA(Asx) + AMP + diphosphate. Functionally, aspartyl-tRNA synthetase with relaxed tRNA specificity since it is able to aspartylate not only its cognate tRNA(Asp) but also tRNA(Asn). Reaction proceeds in two steps: L-aspartate is first activated by ATP to form Asp-AMP and then transferred to the acceptor end of tRNA(Asp/Asn). This chain is Aspartate--tRNA(Asp/Asn) ligase, found in Acinetobacter baumannii (strain ATCC 17978 / DSM 105126 / CIP 53.77 / LMG 1025 / NCDC KC755 / 5377).